We begin with the raw amino-acid sequence, 176 residues long: MDAVILMATEEVGHFGLNTNLLETNVINLAIIIGVLVYFGRGLLGKTLGDRQQQIATAIAEAEERQRTAAARLAQEQQKLAQAKEEAARIREAALVRAKAAKEELIAKAQQEIERLKQTASQDTSAATERAIAEIRERITALALAQAEQQLKERLSHDAELQRTLVDRSIALLGGK.

The helical transmembrane segment at 26 to 45 (VINLAIIIGVLVYFGRGLLG) threads the bilayer.

It belongs to the ATPase B chain family. As to quaternary structure, F-type ATPases have 2 components, F(1) - the catalytic core - and F(0) - the membrane proton channel. F(1) has five subunits: alpha(3), beta(3), gamma(1), delta(1), epsilon(1). F(0) has four main subunits: a(1), b(1), b'(1) and c(10-14). The alpha and beta chains form an alternating ring which encloses part of the gamma chain. F(1) is attached to F(0) by a central stalk formed by the gamma and epsilon chains, while a peripheral stalk is formed by the delta, b and b' chains.

The protein localises to the cellular thylakoid membrane. In terms of biological role, f(1)F(0) ATP synthase produces ATP from ADP in the presence of a proton or sodium gradient. F-type ATPases consist of two structural domains, F(1) containing the extramembraneous catalytic core and F(0) containing the membrane proton channel, linked together by a central stalk and a peripheral stalk. During catalysis, ATP synthesis in the catalytic domain of F(1) is coupled via a rotary mechanism of the central stalk subunits to proton translocation. Component of the F(0) channel, it forms part of the peripheral stalk, linking F(1) to F(0). The polypeptide is ATP synthase subunit b (Synechococcus sp. (strain PCC 6716)).